Consider the following 273-residue polypeptide: Vitamin B12-binding protein (273 aa).

Residues 1–18 (MMKTLSSLLLLFSVSLQA) form the signal peptide. The 251-residue stretch at 23-273 (RVISLAPHAT…EHFASIEQKR (251 aa)) folds into the Fe/B12 periplasmic-binding domain. Cys183 and Cys263 are disulfide-bonded.

It belongs to the BtuF family. As to quaternary structure, the complex is composed of two ATP-binding proteins (BtuD), two transmembrane proteins (BtuC) and a solute-binding protein (BtuF).

It is found in the periplasm. Part of the ABC transporter complex BtuCDF involved in vitamin B12 import. Binds vitamin B12 and delivers it to the periplasmic surface of BtuC. This is Vitamin B12-binding protein from Vibrio vulnificus (strain YJ016).